Consider the following 380-residue polypeptide: Chorismate synthase (380 aa).

Residues Arg-48 and Arg-53 each contribute to the NADP(+) site. FMN-binding positions include 126–128, Gly-284, 299–303, and Arg-326; these read RAS and KPTSS.

The protein belongs to the chorismate synthase family. Requires FMNH2 as cofactor.

It catalyses the reaction 5-O-(1-carboxyvinyl)-3-phosphoshikimate = chorismate + phosphate. Its pathway is metabolic intermediate biosynthesis; chorismate biosynthesis; chorismate from D-erythrose 4-phosphate and phosphoenolpyruvate: step 7/7. Its function is as follows. Catalyzes the anti-1,4-elimination of the C-3 phosphate and the C-6 proR hydrogen from 5-enolpyruvylshikimate-3-phosphate (EPSP) to yield chorismate, which is the branch point compound that serves as the starting substrate for the three terminal pathways of aromatic amino acid biosynthesis. This reaction introduces a second double bond into the aromatic ring system. In Ignicoccus hospitalis (strain KIN4/I / DSM 18386 / JCM 14125), this protein is Chorismate synthase.